A 237-amino-acid chain; its full sequence is Large ribosomal subunit protein uL2 (237 aa).

Polar residues predominate over residues 1-11 (MGKRIISQNRG). Disordered stretches follow at residues 1-20 (MGKR…YRAP) and 201-237 (FGGG…GVRR).

This sequence belongs to the universal ribosomal protein uL2 family. As to quaternary structure, part of the 50S ribosomal subunit. Forms a bridge to the 30S subunit in the 70S ribosome.

One of the primary rRNA binding proteins. Required for association of the 30S and 50S subunits to form the 70S ribosome, for tRNA binding and peptide bond formation. It has been suggested to have peptidyltransferase activity; this is somewhat controversial. Makes several contacts with the 16S rRNA in the 70S ribosome. The sequence is that of Large ribosomal subunit protein uL2 from Archaeoglobus fulgidus (strain ATCC 49558 / DSM 4304 / JCM 9628 / NBRC 100126 / VC-16).